Reading from the N-terminus, the 377-residue chain is Histidine protein methyltransferase 1 (377 aa).

This sequence belongs to the methyltransferase superfamily. METTL18 family.

Its subcellular location is the cytoplasm. The protein resides in the nucleus. It carries out the reaction L-histidyl-[protein] + S-adenosyl-L-methionine = N(tele)-methyl-L-histidyl-[protein] + S-adenosyl-L-homocysteine + H(+). Functionally, protein-histidine N-methyltransferase that mediates methylation of RPL3 at 'His-243'. Methylates ribosome-associated RPL3, but not free RPL3, thereby regulating 60S subunit assembly. In addition to RPL3, mediates His methylation of other proteins. In Saccharomyces cerevisiae (strain ATCC 204508 / S288c) (Baker's yeast), this protein is Histidine protein methyltransferase 1.